The following is a 196-amino-acid chain: Imidazoleglycerol-phosphate dehydratase (196 aa).

Belongs to the imidazoleglycerol-phosphate dehydratase family.

The protein localises to the cytoplasm. The enzyme catalyses D-erythro-1-(imidazol-4-yl)glycerol 3-phosphate = 3-(imidazol-4-yl)-2-oxopropyl phosphate + H2O. Its pathway is amino-acid biosynthesis; L-histidine biosynthesis; L-histidine from 5-phospho-alpha-D-ribose 1-diphosphate: step 6/9. This chain is Imidazoleglycerol-phosphate dehydratase, found in Chlorobium chlorochromatii (strain CaD3).